A 445-amino-acid polypeptide reads, in one-letter code: Exodeoxyribonuclease 7 large subunit (445 aa).

Belongs to the XseA family. As to quaternary structure, heterooligomer composed of large and small subunits.

Its subcellular location is the cytoplasm. The catalysed reaction is Exonucleolytic cleavage in either 5'- to 3'- or 3'- to 5'-direction to yield nucleoside 5'-phosphates.. Functionally, bidirectionally degrades single-stranded DNA into large acid-insoluble oligonucleotides, which are then degraded further into small acid-soluble oligonucleotides. The chain is Exodeoxyribonuclease 7 large subunit from Pasteurella multocida (strain Pm70).